The primary structure comprises 186 residues: ADP-ribosylation factor-like protein 8A (186 aa).

An intramembrane region (note=Mediates targeting to membranes) is located at residues 1–19 (MIALFNKLLDWFKALFWKE). GTP contacts are provided by residues 29 to 35 (QYSGKTT), 71 to 75 (DIGGQ), and 130 to 133 (NKRD).

It belongs to the small GTPase superfamily. Arf family. In terms of assembly, interacts with PLEKHM1. When GTP-bound, interacts with RUFY3 and RUFY4, but not with RUFY1, nor RUFY2. In terms of tissue distribution, ubiquitously expressed.

It is found in the late endosome membrane. Its subcellular location is the lysosome membrane. It localises to the cytoplasm. The protein localises to the cytoskeleton. The protein resides in the spindle. It is found in the cell projection. Its subcellular location is the axon. It localises to the synapse. In terms of biological role, plays a role in lysosome motility. In neurons, mediates the anterograde axonal long-range transport of presynaptic lysosome-related vesicles required for presynaptic biogenesis and synaptic function. May play a role in chromosome segregation. The protein is ADP-ribosylation factor-like protein 8A (ARL8A) of Homo sapiens (Human).